Reading from the N-terminus, the 139-residue chain is Transthyretin-like protein 5 (139 aa).

The N-terminal stretch at 1 to 15 (MKLIILLCLVASSYA) is a signal peptide.

It belongs to the nematode transthyretin-like family.

Its subcellular location is the secreted. This Caenorhabditis elegans protein is Transthyretin-like protein 5 (ttr-5).